The chain runs to 1383 residues: MGERANLVFHNKIIDGTAIKRLISRLIDHFGMAYTSHILDQVKTLGFQQATATSISLGIDDLLTIPSKGWLVQDAEQQSLILEKHHHYGNVHAVEKLRQSIEIWYATSEYLRQEMNPNFRMTDPFNPVHMMSFSGARGNASQVHQLVGMRGLMSDPQGQMIDLPIQSNLREGLSLTEYIISCYGARKGVVDTAVRTSDAGYLTRRLVEVVQHIVVRRTDCGTIRGISVSPRNKNRMMSEPIFIQTLIGRVLADDIYIGSRCVAFRNQDLGIGLVNRFITFGTQSISIRTPFTCRSTSWICRFCYGRSPTHGDLVELGEAVGIIAGQSIGEPGTQLTLRTFHTGGVFTGGTAEHVRAPYNGKIKFNEDLVHPTRTRHGHPAFLCYIDLSVIIESEDIIHSVTIPPKSFLLVQNDQYVESEQVIAEIREGTYTFRFKERVRKYIYSDSEGEMHWSTDVYHAPEFTYSNVHLVPKTSHLWILSGGSCGSSLISFSIHKDQDQMNIPFLSVKRKSICSLSVNNDQVSQKFLSSDFSDKKKSGIPDYSELNGIVGNSHYNLIYSAIFHENSDLLAKRRRNRFLIPFQSIQEQEKEFMPHSGISIAIPINGIFRKNSIFSFFDDPRYRRKSSGILKYGTIEADSIIQKEDMIEYRGVHKFKKKYKMKVDRFFFIPEEVHILPESSVIMVQNYSIIRVDTRITLNIRSQVGGLIRVERKKKRIELKIFSGDIHFPDKTDKIFRHSGILIPPGRGKPNSRESKKVQNWIYVQRITPTKKKFFVLVRPVATYEIADSINLATLFPQDLFREKNNIQLRVVNYILYGNGNPTRGISDTSIQLVRTCLVLNWDQDNKKSSLEEARAFFVAVSTKGLIRDFIRIGLVKSHISYIRKRTNPPDSGLISADHMNPFYSISPKAGIQQSLSQNNGTIRMFLNRNKESQFLLILSSSNCFRMGPFNHVKYHNVINQSIKKNPLITIQKASGPLGTTIQISNFYSFFPLLTYNKMSVIKYLQLDNLKQILKVINSYLIDENGRICNRDPYSNVVLNPFKLNWYFLHQNYHHNYCEEISTIISLGQFFCENLCIAKKGPHLKSGQVLIVQMDSVVLRCAKPYLATPGAKVHGHYGEILYEGDTLVTFIYEKSRSGDITQGLPKVEQVLEVRSIDSISMNLEKRIKGWNKYITRILGIPWGFLVGAELTIVQSRISLVNKIQKVYRSQGVQIHNRHIEIIVRQITSKVLVSEEGMSNVFLPGELIGLLRAERTGRALEEAICYRAILLGITRASLNTQSFISEASFQETARVLAKAALRGRIDWLKGLKENVVLGGGIPAGTGFNKGLVHCSRQHTNILLEKKTKNLCLFEEDMRDILFYHREFFDSSISKLERSFLGFNYS.

Positions 220, 293, 300, and 303 each coordinate Zn(2+).

This sequence belongs to the RNA polymerase beta' chain family. RpoC2 subfamily. In terms of assembly, in plastids the minimal PEP RNA polymerase catalytic core is composed of four subunits: alpha, beta, beta', and beta''. When a (nuclear-encoded) sigma factor is associated with the core the holoenzyme is formed, which can initiate transcription. Zn(2+) serves as cofactor.

The protein localises to the plastid. It localises to the chloroplast. It carries out the reaction RNA(n) + a ribonucleoside 5'-triphosphate = RNA(n+1) + diphosphate. DNA-dependent RNA polymerase catalyzes the transcription of DNA into RNA using the four ribonucleoside triphosphates as substrates. This chain is DNA-directed RNA polymerase subunit beta'', found in Aethionema grandiflorum (Persian stone-cress).